Consider the following 414-residue polypeptide: Serine hydroxymethyltransferase (414 aa).

(6S)-5,6,7,8-tetrahydrofolate is bound by residues Leu116 and 120–122 (GHL). Lys224 is modified (N6-(pyridoxal phosphate)lysine). Residues Glu240 and 348–350 (SPF) contribute to the (6S)-5,6,7,8-tetrahydrofolate site.

This sequence belongs to the SHMT family. Homodimer. Pyridoxal 5'-phosphate is required as a cofactor.

Its subcellular location is the cytoplasm. The enzyme catalyses (6R)-5,10-methylene-5,6,7,8-tetrahydrofolate + glycine + H2O = (6S)-5,6,7,8-tetrahydrofolate + L-serine. It participates in one-carbon metabolism; tetrahydrofolate interconversion. It functions in the pathway amino-acid biosynthesis; glycine biosynthesis; glycine from L-serine: step 1/1. Functionally, catalyzes the reversible interconversion of serine and glycine with tetrahydrofolate (THF) serving as the one-carbon carrier. This reaction serves as the major source of one-carbon groups required for the biosynthesis of purines, thymidylate, methionine, and other important biomolecules. Also exhibits THF-independent aldolase activity toward beta-hydroxyamino acids, producing glycine and aldehydes, via a retro-aldol mechanism. This chain is Serine hydroxymethyltransferase, found in Campylobacter jejuni subsp. jejuni serotype O:23/36 (strain 81-176).